Reading from the N-terminus, the 579-residue chain is Protein downstream neighbor of son homolog (579 aa).

Disordered stretches follow at residues 1–68 (MAEL…RRNP) and 331–379 (FSQP…DESF). Residues 339–348 (DTGKKQKKPE) show a composition bias toward basic and acidic residues. Positions 365-378 (EADEASDESDEDES) are enriched in acidic residues.

The protein belongs to the DONSON family. As to quaternary structure, component of the replisome complex.

It is found in the nucleus. In terms of biological role, replisome component that maintains genome stability by protecting stalled or damaged replication forks. After the induction of replication stress, required for the stabilization of stalled replication forks, the efficient activation of the intra-S-phase and G/2M cell-cycle checkpoints and the maintenance of genome stability. The sequence is that of Protein downstream neighbor of son homolog from Xenopus laevis (African clawed frog).